The sequence spans 37 residues: M-oxotoxin-Ot2a (37 aa).

As to expression, expressed by the venom gland.

The protein localises to the secreted. In terms of biological role, disrupts biological membranes, particularly those rich in phosphocholine. Has antimicrobial activity against Gram-negative bacterium E.coli, Gram-positive bacteria B.subtilis and S.aureus, and hemolytic activity against sheep, pig and guinea pig red blood cells. Has insecticidal activity against S.frugiperda ovarian cells by opening non-selective ion channels. Enhances the insecticidal activity of spider venom neurotoxic peptides. The protein is M-oxotoxin-Ot2a of Oxyopes takobius (Lynx spider).